Consider the following 221-residue polypeptide: MRFHTILLAALASLVIATPLPSDTDVSLERRQSMNSNDLEKGDCKSVAFIFARGSTEIGNMGFVVGPGVCSNLKSTLGSDKVACQGVGGAYTAGLIQNALPANTDSGSIKEAVKMFDLAAKCPDTQIVAGGYSQGSAVIDNAIQKLDDSTRDRVKGVVLFGFTRNLQDKGQIPGYPKDQTKVYCAVGDLVCSGTLIITASHMTYGLNAGDAAKFLASQVSV.

An N-terminal signal peptide occupies residues 1–17 (MRFHTILLAALASLVIA). 2 disulfide bridges follow: Cys-44/Cys-122 and Cys-70/Cys-84. Ser-133 acts as the Nucleophile in catalysis. Cys-184 and Cys-191 are joined by a disulfide. Asp-188 is an active-site residue. Catalysis depends on His-201, which acts as the Proton donor/acceptor.

Belongs to the cutinase family.

The protein resides in the secreted. It catalyses the reaction cutin + H2O = cutin monomers.. Functionally, catalyzes the hydrolysis of complex carboxylic polyesters found in the cell wall of plants. Degrades cutin, a macromolecule that forms the structure of the plant cuticle. Also degrades suberin, a specialized macromolecule found in the cell wall of various plant tissues. This chain is Cutinase 3, found in Emericella nidulans (strain FGSC A4 / ATCC 38163 / CBS 112.46 / NRRL 194 / M139) (Aspergillus nidulans).